Reading from the N-terminus, the 355-residue chain is Septin-2B (355 aa).

In terms of domain architecture, Septin-type G spans Lys33–Lys305. Positions Gly43 to Ser50 are G1 motif. GTP is bound by residues Gly43–Ser50, Thr77, Gly103, Lys182–Glu190, Gly240, and Arg255. The G3 motif stretch occupies residues Asp100–Gly103. The interval Ala181–Asp184 is G4 motif. The important for dimerization stretch occupies residues Trp259–His269.

It belongs to the TRAFAC class TrmE-Era-EngA-EngB-Septin-like GTPase superfamily. Septin GTPase family. In terms of assembly, septins polymerize into heterooligomeric protein complexes that form filaments, and associate with cellular membranes, actin filaments and microtubules. GTPase activity is required for filament formation. Can form heterooligomers with other family members and form filaments. Interacts with wdpcp.

It is found in the cytoplasm. Its subcellular location is the cytoskeleton. The protein resides in the spindle. It localises to the cleavage furrow. The protein localises to the midbody. It is found in the cell cortex. Its subcellular location is the cell projection. The protein resides in the cilium membrane. In terms of biological role, filament-forming cytoskeletal GTPase. Required for normal organization of the actin cytoskeleton. Plays a role in the biogenesis of polarized columnar-shaped epithelium. Required for the progression through mitosis through regulation of chromosome congression. During anaphase, may be required for chromosome segregation and spindle elongation. Plays a role in ciliogenesis and collective cell movements including convergent extension during gastrulation. In cilia, required for the integrity of the diffusion barrier at the base of the primary cilium that prevents diffusion of transmembrane proteins between the cilia and plasma membranes. Controls cell shape and not polarization of cells during convergent extension. This is Septin-2B (sept2-B) from Xenopus tropicalis (Western clawed frog).